The chain runs to 307 residues: Small ribosomal subunit biogenesis GTPase RsgA (307 aa).

The region spanning 78-240 (HKTAFGHLIA…VIDTPGIKEL (163 aa)) is the CP-type G domain. GTP contacts are provided by residues 128–131 (NKSD) and 182–190 (GHSGVGKST). The Zn(2+) site is built by cysteine 264, cysteine 269, histidine 271, and cysteine 277.

This sequence belongs to the TRAFAC class YlqF/YawG GTPase family. RsgA subfamily. In terms of assembly, monomer. Associates with 30S ribosomal subunit, binds 16S rRNA. Requires Zn(2+) as cofactor.

It localises to the cytoplasm. One of several proteins that assist in the late maturation steps of the functional core of the 30S ribosomal subunit. Helps release RbfA from mature subunits. May play a role in the assembly of ribosomal proteins into the subunit. Circularly permuted GTPase that catalyzes slow GTP hydrolysis, GTPase activity is stimulated by the 30S ribosomal subunit. The sequence is that of Small ribosomal subunit biogenesis GTPase RsgA from Cytophaga hutchinsonii (strain ATCC 33406 / DSM 1761 / CIP 103989 / NBRC 15051 / NCIMB 9469 / D465).